The chain runs to 287 residues: Pyridoxal 5'-phosphate synthase subunit PdxS (287 aa).

A D-ribose 5-phosphate-binding site is contributed by Asp21. Lys78 functions as the Schiff-base intermediate with D-ribose 5-phosphate in the catalytic mechanism. Residue Gly150 coordinates D-ribose 5-phosphate. Residue Arg162 coordinates D-glyceraldehyde 3-phosphate. D-ribose 5-phosphate-binding positions include Gly211 and Gly232–Ser233.

The protein belongs to the PdxS/SNZ family. In the presence of PdxT, forms a dodecamer of heterodimers.

The catalysed reaction is aldehydo-D-ribose 5-phosphate + D-glyceraldehyde 3-phosphate + L-glutamine = pyridoxal 5'-phosphate + L-glutamate + phosphate + 3 H2O + H(+). Its pathway is cofactor biosynthesis; pyridoxal 5'-phosphate biosynthesis. Catalyzes the formation of pyridoxal 5'-phosphate from ribose 5-phosphate (RBP), glyceraldehyde 3-phosphate (G3P) and ammonia. The ammonia is provided by the PdxT subunit. Can also use ribulose 5-phosphate and dihydroxyacetone phosphate as substrates, resulting from enzyme-catalyzed isomerization of RBP and G3P, respectively. The chain is Pyridoxal 5'-phosphate synthase subunit PdxS from Francisella philomiragia subsp. philomiragia (strain ATCC 25017 / CCUG 19701 / FSC 153 / O#319-036).